The following is a 620-amino-acid chain: Glutathione-regulated potassium-efflux system protein KefC (620 aa).

The next 12 helical transmembrane spans lie at 4–24, 26–46, 54–74, 90–110, 114–134, 149–169, 178–198, 218–238, 270–290, 294–314, 327–347, and 359–379; these read HTLL…PIAV, LGLG…PWGL, SILH…GLEL, GALQ…FLGL, VAEL…MQAM, FAVL…IPLL, LGAF…VVLL, VFSA…EEVG, GLLL…GTLV, LRIL…LWLV, WFAV…GAAQ, and ALTL…VLLT. An RCK N-terminal domain is found at 399–518; the sequence is QPRVIVAGFG…AGVAMPERET (120 aa). The interval 599–620 is disordered; sequence QGTAEGKHSGEAADEPEVKPSI.

This sequence belongs to the monovalent cation:proton antiporter 2 (CPA2) transporter (TC 2.A.37) family. KefC subfamily. As to quaternary structure, homodimer. Interacts with the regulatory subunit KefF.

Its subcellular location is the cell inner membrane. In terms of biological role, pore-forming subunit of a potassium efflux system that confers protection against electrophiles. Catalyzes K(+)/H(+) antiport. This Salmonella schwarzengrund (strain CVM19633) protein is Glutathione-regulated potassium-efflux system protein KefC.